We begin with the raw amino-acid sequence, 322 residues long: Epoxide hydrolase A (322 aa).

Residues 27–131 (PVVILAHGFP…AVAALSVPAL (105 aa)) form the AB hydrolase-1 domain. D103 functions as the Nucleophile in the catalytic mechanism. The Proton acceptor role is filled by H298.

This sequence belongs to the AB hydrolase superfamily. Epoxide hydrolase family. Homodimer.

The catalysed reaction is an epoxide + H2O = an ethanediol. Its function is as follows. Could be involved in detoxification of extraneous host-cell epoxides. Catalyzes the hydrolysis of epoxide-containing substrates. The sequence is that of Epoxide hydrolase A (ephA) from Mycobacterium tuberculosis (strain ATCC 25618 / H37Rv).